We begin with the raw amino-acid sequence, 338 residues long: Dihydroorotate dehydrogenase (quinone) (338 aa).

FMN-binding positions include 68-72 (AGMDK) and T92. K72 lines the substrate pocket. A substrate-binding site is contributed by 117 to 121 (NRMGF). Residues S147 and N180 each contribute to the FMN site. N180 contacts substrate. S183 serves as the catalytic Nucleophile. N185 is a substrate binding site. K214 and T242 together coordinate FMN. 243–244 (NT) contributes to the substrate binding site. FMN contacts are provided by residues G267, G296, and 317-318 (YT).

It belongs to the dihydroorotate dehydrogenase family. Type 2 subfamily. Monomer. The cofactor is FMN.

The protein resides in the cell membrane. It carries out the reaction (S)-dihydroorotate + a quinone = orotate + a quinol. The protein operates within pyrimidine metabolism; UMP biosynthesis via de novo pathway; orotate from (S)-dihydroorotate (quinone route): step 1/1. Its function is as follows. Catalyzes the conversion of dihydroorotate to orotate with quinone as electron acceptor. In Salinispora arenicola (strain CNS-205), this protein is Dihydroorotate dehydrogenase (quinone).